A 638-amino-acid polypeptide reads, in one-letter code: MGGTIDINKISKLSESAQVDALSTQPFPASKKIYAEGSRPDIRVAMREITLTPTPLQDGATEENAPLRVYDTSGPYTDPAVEIDVRRGLPRMREAWINDRADTEHLTGATSFYAKSREQNLSLDNLRFEHRHAPRKALAGGNVSQLHYARKGIITPEMEYIAIRENLALEQAEIENAMRSQHPGMNFGANTPRYITPEFVRQEVAAGRAVIPCNINHPEAEPMIIGRNFHVKVNANIGNSAVTSSIEEEVEKLVWATRWGADTVMDLSTGKNIHETREWIIRNSPVPIGTVPIYQALEKVDGVAEDLNWEVFRDTLIEQAEQGVDYFTIHAGVLLRYVPMTAKRLTGIVSRGGSIMAKWCLAHHQENFLYTHFEEICEIMKAYDVSFSLGDGLRPGCIADANDEAQFSELRTLGELTEIAWKHDVQTIIEGPGHVPMHMIKENMEEQLKHCKEAPFYTLGPLITDISPGYDHFSSGIGAAMIGWYGCAMLCYVTPKEHLGLPNKDDVKQGLIAYKIAAHAADLAKGHPGAQLRDNAMSKARFEFRWEDQFNIALDPDTARAYHDETLPKEGHKLAHFCSMCGPKFCSMKITQDVRDYSAKLEAEKAQAEGASQQEAEQGMQEMSQKYKDAGRRLYHEV.

Substrate is bound by residues Asn-236, Met-265, Tyr-294, His-330, 350–352 (SRG), 391–394 (DGLR), and Glu-430. Zn(2+) is bound at residue His-434. Tyr-457 is a binding site for substrate. Zn(2+) is bound at residue His-498. Cys-578, Cys-581, and Cys-586 together coordinate [4Fe-4S] cluster. Low complexity predominate over residues 608–624 (AEGASQQEAEQGMQEMS). Residues 608–633 (AEGASQQEAEQGMQEMSQKYKDAGRR) are disordered.

The protein belongs to the ThiC family. In terms of assembly, homodimer. Requires [4Fe-4S] cluster as cofactor.

The catalysed reaction is 5-amino-1-(5-phospho-beta-D-ribosyl)imidazole + S-adenosyl-L-methionine = 4-amino-2-methyl-5-(phosphooxymethyl)pyrimidine + CO + 5'-deoxyadenosine + formate + L-methionine + 3 H(+). It functions in the pathway cofactor biosynthesis; thiamine diphosphate biosynthesis. Its function is as follows. Catalyzes the synthesis of the hydroxymethylpyrimidine phosphate (HMP-P) moiety of thiamine from aminoimidazole ribotide (AIR) in a radical S-adenosyl-L-methionine (SAM)-dependent reaction. The protein is Phosphomethylpyrimidine synthase of Hahella chejuensis (strain KCTC 2396).